A 91-amino-acid polypeptide reads, in one-letter code: Small ribosomal subunit protein uS15 (91 aa).

Belongs to the universal ribosomal protein uS15 family. Part of the 30S ribosomal subunit. Forms a bridge to the 50S subunit in the 70S ribosome, contacting the 23S rRNA.

One of the primary rRNA binding proteins, it binds directly to 16S rRNA where it helps nucleate assembly of the platform of the 30S subunit by binding and bridging several RNA helices of the 16S rRNA. Functionally, forms an intersubunit bridge (bridge B4) with the 23S rRNA of the 50S subunit in the ribosome. In Deinococcus radiodurans (strain ATCC 13939 / DSM 20539 / JCM 16871 / CCUG 27074 / LMG 4051 / NBRC 15346 / NCIMB 9279 / VKM B-1422 / R1), this protein is Small ribosomal subunit protein uS15.